The following is a 388-amino-acid chain: Succinate--CoA ligase [ADP-forming] subunit beta (388 aa).

In terms of domain architecture, ATP-grasp spans Lys9 to Glu244. ATP contacts are provided by residues Lys46, Gly53–Gly55, Glu99, Val102, and Glu107. Residues Asn199 and Asp213 each contribute to the Mg(2+) site. Substrate-binding positions include Asn264 and Gly321–Leu323.

Belongs to the succinate/malate CoA ligase beta subunit family. Heterotetramer of two alpha and two beta subunits. Requires Mg(2+) as cofactor.

It carries out the reaction succinate + ATP + CoA = succinyl-CoA + ADP + phosphate. The enzyme catalyses GTP + succinate + CoA = succinyl-CoA + GDP + phosphate. It participates in carbohydrate metabolism; tricarboxylic acid cycle; succinate from succinyl-CoA (ligase route): step 1/1. In terms of biological role, succinyl-CoA synthetase functions in the citric acid cycle (TCA), coupling the hydrolysis of succinyl-CoA to the synthesis of either ATP or GTP and thus represents the only step of substrate-level phosphorylation in the TCA. The beta subunit provides nucleotide specificity of the enzyme and binds the substrate succinate, while the binding sites for coenzyme A and phosphate are found in the alpha subunit. The polypeptide is Succinate--CoA ligase [ADP-forming] subunit beta (Desulfosudis oleivorans (strain DSM 6200 / JCM 39069 / Hxd3) (Desulfococcus oleovorans)).